The primary structure comprises 211 residues: Large ribosomal subunit protein uL4 (211 aa).

The segment at 40-85 is disordered; sequence QQAHSRQGTASTLTRSEVRGGGRKPYKQKGTGRARQGSVRTPLRPG. A compositionally biased stretch (polar residues) spans 41–54; sequence QAHSRQGTASTLTR. Positions 60–71 are enriched in basic residues; it reads GGRKPYKQKGTG.

It belongs to the universal ribosomal protein uL4 family. In terms of assembly, part of the 50S ribosomal subunit.

Functionally, one of the primary rRNA binding proteins, this protein initially binds near the 5'-end of the 23S rRNA. It is important during the early stages of 50S assembly. It makes multiple contacts with different domains of the 23S rRNA in the assembled 50S subunit and ribosome. In terms of biological role, forms part of the polypeptide exit tunnel. The sequence is that of Large ribosomal subunit protein uL4 from Synechococcus sp. (strain CC9311).